The chain runs to 307 residues: Phosphate import ATP-binding protein PstB (307 aa).

The disordered stretch occupies residues 1 to 30 (MSETTYTTTEDTDDTNSTDSMVGTTTGETD). In terms of domain architecture, ABC transporter spans 48–302 (LGVDDLDVYY…PQSERVEDYI (255 aa)). 80 to 87 (GPSGCGKS) is a binding site for ATP.

It belongs to the ABC transporter superfamily. Phosphate importer (TC 3.A.1.7) family. The complex is composed of two ATP-binding proteins (PstB), two transmembrane proteins (PstC and PstA) and a solute-binding protein (PstS).

The protein localises to the cell membrane. The catalysed reaction is phosphate(out) + ATP + H2O = ADP + 2 phosphate(in) + H(+). Its function is as follows. Part of the ABC transporter complex PstSACB involved in phosphate import. Responsible for energy coupling to the transport system. The polypeptide is Phosphate import ATP-binding protein PstB (Haloquadratum walsbyi (strain DSM 16790 / HBSQ001)).